Here is a 356-residue protein sequence, read N- to C-terminus: Histidinol-phosphate aminotransferase (356 aa).

Lys-214 bears the N6-(pyridoxal phosphate)lysine mark.

The protein belongs to the class-II pyridoxal-phosphate-dependent aminotransferase family. Histidinol-phosphate aminotransferase subfamily. In terms of assembly, homodimer. The cofactor is pyridoxal 5'-phosphate.

The enzyme catalyses L-histidinol phosphate + 2-oxoglutarate = 3-(imidazol-4-yl)-2-oxopropyl phosphate + L-glutamate. Its pathway is amino-acid biosynthesis; L-histidine biosynthesis; L-histidine from 5-phospho-alpha-D-ribose 1-diphosphate: step 7/9. The sequence is that of Histidinol-phosphate aminotransferase from Escherichia coli O45:K1 (strain S88 / ExPEC).